The primary structure comprises 300 residues: Phospholipase A1 (300 aa).

A disulfide bridge links Cys-4 with Cys-87. Ser-137 (nucleophile) is an active-site residue. Asp-165 (charge relay system) is an active-site residue. 2 disulfides stabilise this stretch: Cys-176–Cys-181 and Cys-219–Cys-227. The active-site Charge relay system is His-229. 3 cysteine pairs are disulfide-bonded: Cys-244-Cys-268, Cys-245-Cys-293, and Cys-261-Cys-266.

It belongs to the AB hydrolase superfamily. Lipase family. As to expression, expressed by the venom gland.

The protein resides in the secreted. It carries out the reaction a 1,2-diacyl-sn-glycero-3-phosphocholine + H2O = a 2-acyl-sn-glycero-3-phosphocholine + a fatty acid + H(+). In terms of biological role, catalyzes the hydrolysis of phosphatidylcholine with phospholipase A1 activity. May act as an allergen and induce hemolytic activity. The sequence is that of Phospholipase A1 from Vespula maculifrons (Eastern yellow jacket).